A 163-amino-acid chain; its full sequence is Transcriptional repressor NrdR (163 aa).

Residues 3–34 fold into a zinc finger; that stretch reads CPFCRHPDSRVVDSRVSDDGSSIRRRRQCPQC. An ATP-cone domain is found at 46 to 136; sequence LTVIKRSGIG…VYQAFESLDD (91 aa).

It belongs to the NrdR family. Requires Zn(2+) as cofactor.

Negatively regulates transcription of bacterial ribonucleotide reductase nrd genes and operons by binding to NrdR-boxes. The chain is Transcriptional repressor NrdR from Renibacterium salmoninarum (strain ATCC 33209 / DSM 20767 / JCM 11484 / NBRC 15589 / NCIMB 2235).